The primary structure comprises 467 residues: tRNA modification GTPase MnmE (467 aa).

Positions 25, 87, and 130 each coordinate (6S)-5-formyl-5,6,7,8-tetrahydrofolate. The region spanning 226 to 389 (GLSVVLAGQP…LRGELLRIAG (164 aa)) is the TrmE-type G domain. Asn236 is a binding site for K(+). Residues 236–241 (NVGKSS), 255–261 (TPIAGTT), and 280–283 (DTAG) contribute to the GTP site. Ser240 provides a ligand contact to Mg(2+). Residues Thr255, Ile257, and Thr260 each coordinate K(+). A Mg(2+)-binding site is contributed by Thr261. (6S)-5-formyl-5,6,7,8-tetrahydrofolate is bound at residue Lys467.

The protein belongs to the TRAFAC class TrmE-Era-EngA-EngB-Septin-like GTPase superfamily. TrmE GTPase family. In terms of assembly, homodimer. Heterotetramer of two MnmE and two MnmG subunits. The cofactor is K(+).

The protein resides in the cytoplasm. Exhibits a very high intrinsic GTPase hydrolysis rate. Involved in the addition of a carboxymethylaminomethyl (cmnm) group at the wobble position (U34) of certain tRNAs, forming tRNA-cmnm(5)s(2)U34. In Burkholderia thailandensis (strain ATCC 700388 / DSM 13276 / CCUG 48851 / CIP 106301 / E264), this protein is tRNA modification GTPase MnmE.